Consider the following 126-residue polypeptide: Aspartate 1-decarboxylase (126 aa).

The Schiff-base intermediate with substrate; via pyruvic acid role is filled by Ser25. At Ser25 the chain carries Pyruvic acid (Ser). Thr57 contributes to the substrate binding site. Catalysis depends on Tyr58, which acts as the Proton donor. 73 to 75 serves as a coordination point for substrate; that stretch reads GAA.

The protein belongs to the PanD family. Heterooctamer of four alpha and four beta subunits. It depends on pyruvate as a cofactor. Post-translationally, is synthesized initially as an inactive proenzyme, which is activated by self-cleavage at a specific serine bond to produce a beta-subunit with a hydroxyl group at its C-terminus and an alpha-subunit with a pyruvoyl group at its N-terminus.

The protein resides in the cytoplasm. It catalyses the reaction L-aspartate + H(+) = beta-alanine + CO2. The protein operates within cofactor biosynthesis; (R)-pantothenate biosynthesis; beta-alanine from L-aspartate: step 1/1. Its function is as follows. Catalyzes the pyruvoyl-dependent decarboxylation of aspartate to produce beta-alanine. In Nitrosococcus oceani (strain ATCC 19707 / BCRC 17464 / JCM 30415 / NCIMB 11848 / C-107), this protein is Aspartate 1-decarboxylase.